Here is a 308-residue protein sequence, read N- to C-terminus: NADH-cytochrome b5 reductase 1 (308 aa).

The helical transmembrane segment at Ile10–Ile27 threads the bilayer. The FAD-binding FR-type domain occupies Thr59–Thr164. FAD contacts are provided by residues Thr144 to Gly159 and His170 to Leu207.

The protein belongs to the flavoprotein pyridine nucleotide cytochrome reductase family. Monomer. Component of the 2-(3-amino-3-carboxypropyl)histidine synthase complex composed of DPH1, DPH2, DPH3 and a NADH-dependent reductase, predominantly CBR1. FAD serves as cofactor.

It localises to the mitochondrion outer membrane. The enzyme catalyses 2 Fe(III)-[cytochrome b5] + NADH = 2 Fe(II)-[cytochrome b5] + NAD(+) + H(+). The catalysed reaction is 2 Fe(3+)-[Dph3] + NADH = 2 Fe(2+)-[Dph3] + NAD(+) + H(+). It functions in the pathway protein modification; peptidyl-diphthamide biosynthesis. In terms of biological role, NADH-dependent reductase for DPH3 and cytochrome b5. Required for the first step of diphthamide biosynthesis, a post-translational modification of histidine which occurs in elongation factor 2. DPH1 and DPH2 transfer a 3-amino-3-carboxypropyl (ACP) group from S-adenosyl-L-methionine (SAM) to a histidine residue, the reaction is assisted by a reduction system comprising DPH3 and a NADH-dependent reductase, predominantly CBR1. By reducing DPH3, also involved in the formation of the tRNA wobble base modification mcm5s 2U (5-methoxycarbonylmethyl-2-thiouridine), mediated by the elongator complex. The cytochrome b5/NADH cytochrome b5 reductase electron transfer system supports the catalytic activity of several sterol biosynthetic enzymes. The chain is NADH-cytochrome b5 reductase 1 (CBR1) from Coccidioides immitis (strain RS) (Valley fever fungus).